A 379-amino-acid chain; its full sequence is Anomalous homeobox protein (379 aa).

Positions 135–196 (PEGLKSRNFP…NYRRRQRALP (62 aa)) form a DNA-binding region, homeobox. A disordered region spans residues 195-283 (LPQHMKPAQQ…SKPLDVSGHP (89 aa)). Residues 237-246 (QWSEEREEKG) show a composition bias toward basic and acidic residues.

Its subcellular location is the nucleus. The polypeptide is Anomalous homeobox protein (ANHX) (Homo sapiens (Human)).